A 348-amino-acid polypeptide reads, in one-letter code: Heat-inducible transcription repressor HrcA (348 aa).

It belongs to the HrcA family.

In terms of biological role, negative regulator of class I heat shock genes (grpE-dnaK-dnaJ and groELS operons). Prevents heat-shock induction of these operons. The sequence is that of Heat-inducible transcription repressor HrcA from Chlorobium chlorochromatii (strain CaD3).